The sequence spans 99 residues: Protein RnfH (99 aa).

The protein belongs to the UPF0125 (RnfH) family.

The polypeptide is Protein RnfH (Buchnera aphidicola subsp. Acyrthosiphon pisum (strain 5A)).